The chain runs to 114 residues: UPF0342 protein LSL_0473 (114 aa).

This sequence belongs to the UPF0342 family.

This is UPF0342 protein LSL_0473 from Ligilactobacillus salivarius (strain UCC118) (Lactobacillus salivarius).